A 162-amino-acid polypeptide reads, in one-letter code: Protein S40-4 (162 aa).

Belongs to the senescence regulator S40 family.

The protein localises to the cytoplasm. This is Protein S40-4 from Arabidopsis thaliana (Mouse-ear cress).